Reading from the N-terminus, the 663-residue chain is UvrABC system protein B (663 aa).

One can recognise a Helicase ATP-binding domain in the interval 30-414 (EGIKAGKRHQ…IEHTDKMVEQ (385 aa)). ATP is bound at residue 43-50 (GATGTGKT). The Beta-hairpin motif lies at 96–119 (YYDYYQPEAYVPSTDTFIEKDASI). The 167-residue stretch at 434–600 (QIDDLLSEIQ…TINKKIHDLI (167 aa)) folds into the Helicase C-terminal domain. The 36-residue stretch at 627-662 (QKTIDNIEKEMKQAAKDLDFEKATELRDMLFELKAE) folds into the UVR domain.

This sequence belongs to the UvrB family. In terms of assembly, forms a heterotetramer with UvrA during the search for lesions. Interacts with UvrC in an incision complex.

It is found in the cytoplasm. The UvrABC repair system catalyzes the recognition and processing of DNA lesions. A damage recognition complex composed of 2 UvrA and 2 UvrB subunits scans DNA for abnormalities. Upon binding of the UvrA(2)B(2) complex to a putative damaged site, the DNA wraps around one UvrB monomer. DNA wrap is dependent on ATP binding by UvrB and probably causes local melting of the DNA helix, facilitating insertion of UvrB beta-hairpin between the DNA strands. Then UvrB probes one DNA strand for the presence of a lesion. If a lesion is found the UvrA subunits dissociate and the UvrB-DNA preincision complex is formed. This complex is subsequently bound by UvrC and the second UvrB is released. If no lesion is found, the DNA wraps around the other UvrB subunit that will check the other stand for damage. The chain is UvrABC system protein B from Staphylococcus aureus (strain MSSA476).